Consider the following 661-residue polypeptide: Solute carrier organic anion transporter family member 1A4 (661 aa).

Residues 1–20 are Cytoplasmic-facing; sequence MGKSEKRVATHGVRCFAKIK. Residues 21–40 form a helical membrane-spanning segment; the sequence is MFLLALTCAYVSKSLSGTYM. The Extracellular portion of the chain corresponds to 41 to 59; it reads NSMLTQIERQFGIPTSIVG. The helical transmembrane segment at 60 to 80 threads the bilayer; sequence LINGSFEIGNLLLIIFVSYFG. Residues 81–86 are Cytoplasmic-facing; sequence TKLHRP. A helical transmembrane segment spans residues 87 to 111; the sequence is IMIGVGCAVMGLGCFLISLPHFLMG. The Extracellular segment spans residues 112 to 154; the sequence is QYEYETILPTSNVSSNSFFCVENRSQTLNPTQDPSECVKEMKS. Residues Asn-123 and Asn-134 are each glycosylated (N-linked (GlcNAc...) asparagine). Residues 155–183 traverse the membrane as a helical segment; that stretch reads LMWIYVLVGNIIRGIGETPIMPLGISYIE. Residues 184 to 202 are Cytoplasmic-facing; the sequence is DFAKSENSPLYIGILETGM. Residues 203-223 traverse the membrane as a helical segment; it reads TIGPLIGLLLASSCANIYVDI. Topologically, residues 224–241 are extracellular; it reads ESVNTDDLTITPTDTRWV. The chain crosses the membrane as a helical span at residues 242-266; sequence GAWWIGFLVCAGVNILTSFPFFFFP. The Cytoplasmic portion of the chain corresponds to 267 to 310; that stretch reads KTLPKEGLQENVDGTENAKEKKHRKKAKEEKRGITKDFFVFMKS. The helical transmembrane segment at 311-332 threads the bilayer; sequence LSCNPIYMLFILISVLQFNAFI. At 333 to 352 the chain is on the extracellular side; sequence NSFTFMPKYLEQQYGKSTAE. The helical transmembrane segment at 353–376 threads the bilayer; sequence VVFLMGLYMLPPICLGYLIGGLIM. Residues 377–380 are Cytoplasmic-facing; sequence KKFK. A helical transmembrane segment spans residues 381-404; it reads VTVKKAAHLAFWLCLSEYLLSFLS. Over 405–512 the chain is Extracellular; that stretch reads YVMTCDNFPV…PDCANKLQYF (108 aa). Residues 432-487 enclose the Kazal-like domain; the sequence is NKVLADCNTRCNCSTNTWDPVCGDNGLAYMSACLAGCEKSVGTGTNMVFQNCSCIQ. Intrachain disulfides connect Cys-438–Cys-468, Cys-444–Cys-464, and Cys-453–Cys-485. A glycan (N-linked (GlcNAc...) asparagine) is linked at Asn-443. 2 N-linked (GlcNAc...) asparagine glycosylation sites follow: Asn-482 and Asn-491. The helical transmembrane segment at 513-535 threads the bilayer; it reads LIIAIFGCFIYSLAGIPGYMVLL. The Cytoplasmic segment spans residues 536 to 544; that stretch reads RCIKSEEKS. Residues 545–570 traverse the membrane as a helical segment; that stretch reads LGVGLHAFCIRILAGIPAPIYFGALI. At 571–604 the chain is on the extracellular side; the sequence is DRTCLHWGTLKCGEPGACRMYDINSFRRLYLGLP. Residues 605–622 form a helical membrane-spanning segment; that stretch reads AALRGASFVPAFFILRLT. The Cytoplasmic segment spans residues 623 to 661; it reads RTFQFPGDIESSKTDHAEMKLTLKESECTEVLRSKVTED. Ser-633 and Ser-634 each carry phosphoserine.

The protein belongs to the organo anion transporter (TC 2.A.60) family. As to expression, highly expressed in brain, liver, and kidney but not expressed in heart, spleen, lung, skeletal muscle, and testis.

The protein localises to the cell membrane. The enzyme catalyses estrone 3-sulfate(out) = estrone 3-sulfate(in). It catalyses the reaction taurocholate(out) = taurocholate(in). The catalysed reaction is prostaglandin E2(out) = prostaglandin E2(in). It carries out the reaction L-thyroxine(out) = L-thyroxine(in). Functionally, mediates the Na(+)-independent transport of organic anions such as taurocholate, cholate, 17-beta-glucuronosyl estradiol, prostaglandin E2, estrone 3-sulfate, L-thyroxine (T4), the cardiac glycosides ouabain and digoxin and thyroid hormones. May play an especially important role in the brain accumulation and toxicity of digoxin and in the hepatobiliary and renal excretion of cardiac glycosides. Shows a pH-sensitive substrate specificity which may be ascribed to the protonation state of the binding site and leads to a stimulation of substrate transport in an acidic microenvironment. Hydrogencarbonate/HCO3(-) acts as the probable counteranion that exchanges for organic anions. The chain is Solute carrier organic anion transporter family member 1A4 (Slco1a4) from Rattus norvegicus (Rat).